We begin with the raw amino-acid sequence, 144 residues long: Transcription antitermination protein NusB (144 aa).

It belongs to the NusB family.

Its function is as follows. Involved in transcription antitermination. Required for transcription of ribosomal RNA (rRNA) genes. Binds specifically to the boxA antiterminator sequence of the ribosomal RNA (rrn) operons. This chain is Transcription antitermination protein NusB, found in Haemophilus influenzae (strain PittGG).